We begin with the raw amino-acid sequence, 673 residues long: MNDQGIKESIETLKEQIRKYDYHYYVLDEPLVPDAEYDRCFKALQQYEEQYPQFLSPDSPTQRVSGTPSDAFMPVAHKQAMLSLSNVFTTDELKAFIKRAIEKLDEPNQQLVFACEPKLDGLAVNMTYEGGILTHAATRGDGAVGENITANIKTIASVPLRLRVSNPPKLIEVRGEVYIPKADFEAYNARARELGEKTFANPRNAAAGSLRQLNPEISASRPLAIYCYGIGACEDYKLPNSHLEQLNLLKEFGFRVSPETRRAVGVEGCLDYYQYMLAKRNQLPFEIDGVVYKIDSISLQQQLGYVSRAPRFACAHKFPATEEMTRLIAVDFQVGRTGAVTPVARLEPVSVGGVTVSNATLHNFDEITRKDIHIGDTVIIRRAGDVIPEVVSVILEKRPANARKIELPKNCPVCGSEVVREADEAIARCVGGLYCKAQLKRMMWHFASRKAMYIEGLGSVLIDQLVDEGIVHHLADLYELDLQTLANLPRMGEKSAKNLLSALEKSKKTTFNRFLYALGIREIGEAGARVLAEHYCDVESLKAATIEELMTLNDIGPVAASHIVHFFAQAHNLEVIDRLLELGIHWPKPEKIQVNQQNPFFGKTVVLTGTLSTMGREEAKAKLLALGAKVSGSVSSKTDYLVAGSEAGSKLVKATELGVAIIEEDEFLKWVNS.

NAD(+) contacts are provided by residues 34-38 (DAEYD), 83-84 (SL), and Glu116. Lys118 acts as the N6-AMP-lysine intermediate in catalysis. Arg139, Glu176, Lys293, and Lys317 together coordinate NAD(+). Cys411, Cys414, Cys429, and Cys435 together coordinate Zn(2+). The 79-residue stretch at 595-673 (NQQNPFFGKT…EDEFLKWVNS (79 aa)) folds into the BRCT domain.

The protein belongs to the NAD-dependent DNA ligase family. LigA subfamily. It depends on Mg(2+) as a cofactor. Mn(2+) is required as a cofactor.

The enzyme catalyses NAD(+) + (deoxyribonucleotide)n-3'-hydroxyl + 5'-phospho-(deoxyribonucleotide)m = (deoxyribonucleotide)n+m + AMP + beta-nicotinamide D-nucleotide.. Functionally, DNA ligase that catalyzes the formation of phosphodiester linkages between 5'-phosphoryl and 3'-hydroxyl groups in double-stranded DNA using NAD as a coenzyme and as the energy source for the reaction. It is essential for DNA replication and repair of damaged DNA. The chain is DNA ligase from Legionella pneumophila (strain Corby).